The following is a 196-amino-acid chain: Ribosome maturation factor RimP (196 aa).

Residues 176 to 196 are disordered; the sequence is ETNFDEVSTELETDTPSEGDQ. Over residues 177-196 the composition is skewed to acidic residues; the sequence is TNFDEVSTELETDTPSEGDQ.

This sequence belongs to the RimP family.

It localises to the cytoplasm. Its function is as follows. Required for maturation of 30S ribosomal subunits. This chain is Ribosome maturation factor RimP, found in Roseobacter denitrificans (strain ATCC 33942 / OCh 114) (Erythrobacter sp. (strain OCh 114)).